The sequence spans 472 residues: Guanine nucleotide-binding protein alpha-1 subunit (472 aa).

G2 carries N-myristoyl glycine lipidation. C3 is lipidated: S-palmitoyl cysteine. The G-alpha domain occupies 40-472 (NEIKLLLLGA…QQNLKKIGII (433 aa)). Residues 43–56 (KLLLLGAGESGKST) form a G1 motif region. E51, S52, G53, K54, S55, and T56 together coordinate GTP. S55 is a binding site for Mg(2+). Residues 127–235 (LDYINASVAG…REIQGQNRRN (109 aa)) form an insert; not present in other G-proteins region. The interval 162–199 (GRAKAAFDEDGNISNVKSDTDRDAETVTQNEDADRNNS) is disordered. K165 participates in a covalent cross-link: Glycyl lysine isopeptide (Lys-Gly) (interchain with G-Cter in ubiquitin). The tract at residues 292–300 (DILKGRIKT) is G2 motif. Residues L294, T300, G322, N388, K389, D391, and A444 each contribute to the GTP site. Residue T300 participates in Mg(2+) binding. The G3 motif stretch occupies residues 315–324 (FKVLDAGGQR). The tract at residues 384–391 (ILFLNKID) is G4 motif. The interval 442-447 (TCATDT) is G5 motif.

It belongs to the G-alpha family. G(q) subfamily. As to quaternary structure, g proteins are composed of 3 units; alpha, beta and gamma. The alpha chain contains the guanine nucleotide binding site. In its GDP-bound form, binds to the G protein beta-gamma dimer STE4-STE18. Directly interacts with the beta subunit STE4. Probably forms preactivation complexes with unligated receptors STE2 and STE3. Interacts with FUS3. Pheromone-induced activation of GPA1 increases its association with FUS3. Interacts with SCP160. SCP160 binds specifically to the GTP-bound form of GPA1. Interacts with the phosphatidylinositol 3-kinase (PI3K) subunits VPS15 and VPS34 at the endosome. The GTP-bound form of GPA1 binds directly and selectively to the catalytic subunit VPS34, while the GDP-bound form binds to VPS15, which appears to function as an alternative G protein beta subunit for GPA1. Interacts with regulators of G protein signaling (RGS) proteins MDM1, RAX1, RGS2 and SST2, but SST2 alone binds preferentially to the transition state conformation of GPA1, indicating that it acts as a GAP for this G protein. Requires Mg(2+) as cofactor. Post-translationally, N-myristoylation by NMT1 is pheromone-stimulated and required for palmitoylation of Cys-3. This lipid modification anchors the protein to membranes. Depalmitoylated by YLR118C/APT1. Monoubiquitination targets the protein for degradation to the vacuole, and polyubiquitination tags the protein for degradation by the proteasome. This may be an additional signaling regulation mechanism.

The protein localises to the cell membrane. The protein resides in the endosome membrane. Its activity is regulated as follows. Alternates between an inactive form bound to GDP and an active form bound to GTP. Activated by the G protein coupled receptors (GPCRs) STE2 and STE3, which serve as guanine nucleotide-exchange factors (GEFs), and inactivated by SST2, probably acting as a GTPase-activating protein (GAP). Alpha subunit of the heterotrimeric guanine nucleotide-binding protein (G protein) that mediates mating pheromone signal transduction. Binding of alpha-factor or a-factor to its cognate transmembrane receptor STE2 and STE3, respectively, allows the receptor to serve as a guanine nucleotide exchange factor (GEF) on GPA1. The exchange of GDP for GTP on the G protein alpha subunit alters its interaction with the G protein beta subunit STE4, leading to dissociation of the G protein beta-gamma dimer STE4-STE18. The dissociated subunits activate downstream effectors to activate the mating response pathway and induce changes necessary to produce mating-competent cells. STE4-STE18 activate the downstream pheromone signaling MAP kinase cascade leading to expression of mating-specific genes, inducing cell cycle arrest in G1, promoting polarized cell growth to form mating projections (shmoos), and establishing the changes in plasma membrane, cell wall and nuclear envelope to permit cell-cell fusion (plasmogamy) and fusion of the two haploid nuclei (karyogamy). GPA1 transmits a signal that requires direct binding to the effector enzyme PI3K located at the endosome, promoting increased PI3 production. The intrinsic GTPase activity of GPA1 determines the duration of signaling, and is dramatically accelerated by the RGS protein SST2. In unstimulated cells, GDP-bound GPA1 sequesters the G protein beta-gamma subunit STE4-STE18, preventing it from activating the downstream effectors. Also down-regulates the signal by inhibiting the pheromone-induced accumulation of FUS3 in the nucleus. The protein is Guanine nucleotide-binding protein alpha-1 subunit (GPA1) of Saccharomyces cerevisiae (strain ATCC 204508 / S288c) (Baker's yeast).